Here is a 34-residue protein sequence, read N- to C-terminus: Photosystem II reaction center protein M (34 aa).

The helical transmembrane segment at 5–25 (ILAFIATALFISIPTAFLLIP) threads the bilayer.

It belongs to the PsbM family. PSII is composed of 1 copy each of membrane proteins PsbA, PsbB, PsbC, PsbD, PsbE, PsbF, PsbH, PsbI, PsbJ, PsbK, PsbL, PsbM, PsbT, PsbX, PsbY, PsbZ, Psb30/Ycf12, at least 3 peripheral proteins of the oxygen-evolving complex and a large number of cofactors. It forms dimeric complexes.

Its subcellular location is the plastid. The protein localises to the chloroplast thylakoid membrane. Functionally, one of the components of the core complex of photosystem II (PSII). PSII is a light-driven water:plastoquinone oxidoreductase that uses light energy to abstract electrons from H(2)O, generating O(2) and a proton gradient subsequently used for ATP formation. It consists of a core antenna complex that captures photons, and an electron transfer chain that converts photonic excitation into a charge separation. This subunit is found at the monomer-monomer interface. The sequence is that of Photosystem II reaction center protein M from Psilotum nudum (Whisk fern).